A 402-amino-acid chain; its full sequence is BTB and MATH domain-containing protein 40 (402 aa).

The interval 1 to 25 (MSDRHLYGSDHSYLSSKPSCSSCRR) is disordered. Positions 15-25 (SSKPSCSSCRR) are enriched in low complexity. Residues 43-177 (VLTQRWTVCN…DKSLVISCHI (135 aa)) form the MATH domain. The region spanning 222-295 (TDMTIVAGPL…IYAGVIKSDI (74 aa)) is the BTB domain.

Interacts with cul-3.

It participates in protein modification; protein ubiquitination. Functionally, probable substrate-specific adapter of an E3 ubiquitin-protein ligase complex which mediates the ubiquitination and subsequent proteasomal degradation of target proteins. The polypeptide is BTB and MATH domain-containing protein 40 (bath-40) (Caenorhabditis elegans).